A 210-amino-acid chain; its full sequence is Glutathione S-transferase 3 (210 aa).

Residues 1–80 form the GST N-terminal domain; the sequence is MDFYYLPLSA…YLVEKYGKQN (80 aa). Glutathione is bound by residues serine 9, 50 to 52, and 64 to 66; these read HTI and ESR. Residues 87 to 208 form the GST C-terminal domain; it reads CPKKRALINQ…AGCLEMKKYF (122 aa).

The protein belongs to the GST superfamily. Theta family. Homodimer.

It catalyses the reaction RX + glutathione = an S-substituted glutathione + a halide anion + H(+). In terms of biological role, conjugation of reduced glutathione to a wide number of exogenous and endogenous hydrophobic electrophiles. In Musca domestica (House fly), this protein is Glutathione S-transferase 3 (Gst3).